The chain runs to 43 residues: Photosystem II reaction center protein K (43 aa).

Residues Met1 to Ala6 constitute a propeptide that is removed on maturation. A helical membrane pass occupies residues Ile18 to Ala38.

Belongs to the PsbK family. As to quaternary structure, PSII is composed of 1 copy each of membrane proteins PsbA, PsbB, PsbC, PsbD, PsbE, PsbF, PsbH, PsbI, PsbJ, PsbK, PsbL, PsbM, PsbT, PsbX, PsbY, PsbZ, Psb30/Ycf12, at least 3 peripheral proteins of the oxygen-evolving complex and a large number of cofactors. It forms dimeric complexes.

The protein resides in the plastid. It is found in the chloroplast thylakoid membrane. Its function is as follows. One of the components of the core complex of photosystem II (PSII). PSII is a light-driven water:plastoquinone oxidoreductase that uses light energy to abstract electrons from H(2)O, generating O(2) and a proton gradient subsequently used for ATP formation. It consists of a core antenna complex that captures photons, and an electron transfer chain that converts photonic excitation into a charge separation. The chain is Photosystem II reaction center protein K from Oltmannsiellopsis viridis (Marine flagellate).